A 94-amino-acid polypeptide reads, in one-letter code: Cell division topological specificity factor (94 aa).

The protein belongs to the MinE family.

Functionally, prevents the cell division inhibition by proteins MinC and MinD at internal division sites while permitting inhibition at polar sites. This ensures cell division at the proper site by restricting the formation of a division septum at the midpoint of the long axis of the cell. This chain is Cell division topological specificity factor, found in Acetivibrio thermocellus (strain ATCC 27405 / DSM 1237 / JCM 9322 / NBRC 103400 / NCIMB 10682 / NRRL B-4536 / VPI 7372) (Clostridium thermocellum).